A 290-amino-acid polypeptide reads, in one-letter code: Agglutinin-2 (290 aa).

The signal sequence occupies residues 1-35 (MAISNTNLLQTKKPISLPLLAFITLFLMLLNRVNS). N-linked (GlcNAc...) asparagine glycosylation occurs at Asn155. Residues Glu165 and Asp167 each coordinate Mn(2+). Ca(2+) contacts are provided by Asp167, Asn171, and Asp175. Mn(2+) contacts are provided by Asp175 and His180. Asn200 carries N-linked (GlcNAc...) asparagine glycosylation.

It belongs to the leguminous lectin family. As to quaternary structure, homotetramer.

Mannose/glucose binding bark lectin. Its function is as follows. Bark lectins are storage proteins that probably maintain stocks of nitrogen during dormant period. Self-aggregatable molecules that can bind their own carbohydrate side chains. They could also play a role in the plant's defense against phytophagous invertebrates or herbivorous higher animals. The chain is Agglutinin-2 from Cladrastis kentukea (Yellow wood).